We begin with the raw amino-acid sequence, 140 residues long: MNKQRTLSIIKPDAVEKNIIGEIYRRFEKSGLKVVAAKMKHLSKAEAEGFYAVHKDRPFFSALVEFMISGPVMIQVLEGDNAIAKNRKLMGATNPKEAEAGTIRADFADSIDANAVHGSDAPETAAQEIKYFFSDIEIVG.

Lysine 11, phenylalanine 59, arginine 87, threonine 93, arginine 104, and asparagine 114 together coordinate ATP. Histidine 117 functions as the Pros-phosphohistidine intermediate in the catalytic mechanism.

The protein belongs to the NDK family. In terms of assembly, homotetramer. Mg(2+) serves as cofactor.

The protein localises to the cytoplasm. The enzyme catalyses a 2'-deoxyribonucleoside 5'-diphosphate + ATP = a 2'-deoxyribonucleoside 5'-triphosphate + ADP. It carries out the reaction a ribonucleoside 5'-diphosphate + ATP = a ribonucleoside 5'-triphosphate + ADP. In terms of biological role, major role in the synthesis of nucleoside triphosphates other than ATP. The ATP gamma phosphate is transferred to the NDP beta phosphate via a ping-pong mechanism, using a phosphorylated active-site intermediate. This is Nucleoside diphosphate kinase from Francisella philomiragia subsp. philomiragia (strain ATCC 25017 / CCUG 19701 / FSC 153 / O#319-036).